A 291-amino-acid chain; its full sequence is Meiosis-specific protein SPO13 (291 aa).

3 disordered regions span residues 1 to 30 (MAPR…QEKT), 116 to 143 (SFDN…QSSQ), and 271 to 291 (CSDY…SSLN). Positions 3 to 6 (PRKR) match the Nuclear localization signal motif. Residues 116–125 (SFDNSLRFED) show a composition bias toward basic and acidic residues. Polar residues predominate over residues 130 to 143 (PKSTSTPVLSQSSQ).

It is found in the nucleus. Its function is as follows. Required for meiosis I segmentation. Probably acts as a regulator of kinetochore function during meiosis I: required both for mono-orientation of kinetochores on sister chromosomes and protection of centromeric cohesin from separase-mediated cleavage. The sequence is that of Meiosis-specific protein SPO13 (SPO13) from Saccharomyces cerevisiae (strain ATCC 204508 / S288c) (Baker's yeast).